The sequence spans 105 residues: Protamine-2 (105 aa).

Residues 1–74 (MVRYRMRSPS…RRSCRRRRRH (74 aa)) are disordered. Phosphoserine occurs at positions 8, 10, and 33. A compositionally biased stretch (basic and acidic residues) spans 33–42 (SPERVEDYGR). Residues 43-74 (THRGHHRHRRCSRKRLHRIHKRRRSCRRRRRH) are compositionally biased toward basic residues.

The protein belongs to the protamine P2 family. As to quaternary structure, interacts with TDRP. In terms of processing, proteolytic processing into mature chains is required for histone eviction during spermatogenesis. Transition proteins (TNP1 and TNP2) are required for processing. Testis.

Its subcellular location is the nucleus. It localises to the chromosome. In terms of biological role, protamines substitute for histones in the chromatin of sperm during the haploid phase of spermatogenesis. They compact sperm DNA into a highly condensed, stable and inactive complex. The sequence is that of Protamine-2 (Prm2) from Rattus fuscipes (Bush rat).